Here is a 552-residue protein sequence, read N- to C-terminus: C-type lectin receptor-like tyrosine-protein kinase At1g52310 (552 aa).

An N-terminal signal peptide occupies residues 1 to 27 (MELKWVSCRKQSLFLISCLALLCLASL). Topologically, residues 28-201 (DTISCESTQN…DIKCRNCHKY (174 aa)) are extracellular. Residues N37, N59, N69, N106, N118, N137, N154, N169, and N180 are each glycosylated (N-linked (GlcNAc...) asparagine). The C-type lectin domain occupies 59–188 (NQTKCYAYFK…CNASHAFVCA (130 aa)). Cystine bridges form between C80-C187 and C164-C179. A helical transmembrane segment spans residues 202-222 (LVILAVVSGLILFTTFAIILW). The Cytoplasmic portion of the chain corresponds to 223–552 (LLVYKRSKKR…QQLVQPLEVK (330 aa)). The Protein kinase domain maps to 268–546 (SEANRLAGDA…HVVHQLQQLV (279 aa)). ATP contacts are provided by residues 274 to 282 (AGDAKTGGT) and K296. Residue D394 is the Proton acceptor of the active site.

Belongs to the protein kinase superfamily. Tyr protein kinase family.

Its subcellular location is the cell membrane. The catalysed reaction is L-tyrosyl-[protein] + ATP = O-phospho-L-tyrosyl-[protein] + ADP + H(+). The chain is C-type lectin receptor-like tyrosine-protein kinase At1g52310 from Arabidopsis thaliana (Mouse-ear cress).